A 415-amino-acid polypeptide reads, in one-letter code: Tyrosine--tRNA ligase (415 aa).

Residues 54-63 (PTGSNIHLGH) carry the 'HIGH' region motif. The 'KMSKS' region signature appears at 248–252 (KMSKS). An ATP-binding site is contributed by lysine 251. An S4 RNA-binding domain is found at 351–414 (AKAFYLFSAV…LGKKTFRRLV (64 aa)).

This sequence belongs to the class-I aminoacyl-tRNA synthetase family. TyrS type 2 subfamily. Homodimer.

Its subcellular location is the cytoplasm. It carries out the reaction tRNA(Tyr) + L-tyrosine + ATP = L-tyrosyl-tRNA(Tyr) + AMP + diphosphate + H(+). Functionally, catalyzes the attachment of tyrosine to tRNA(Tyr) in a two-step reaction: tyrosine is first activated by ATP to form Tyr-AMP and then transferred to the acceptor end of tRNA(Tyr). The protein is Tyrosine--tRNA ligase of Synechococcus sp. (strain CC9605).